We begin with the raw amino-acid sequence, 118 residues long: Basic leucine zipper transcriptional factor ATF-like 3 (118 aa).

The tract at residues 1–69 (MSQGPPAVSV…HESLEQENSV (69 aa)) is disordered. 2 positions are modified to phosphoserine: serine 2 and serine 24. Residues 28–91 (DDRKVRRREK…RHLSEVLKEH (64 aa)) form the bZIP domain. A basic motif region spans residues 30-55 (RKVRRREKNRVAAQRSRKKQTQKADK). Residues 51–69 (QKADKLHEEHESLEQENSV) show a composition bias toward basic and acidic residues. The interval 56-84 (LHEEHESLEQENSVLRREISKLKEELRHL) is leucine-zipper.

Belongs to the bZIP family. Heterodimer; heterodimerizes with JUN family proteins. Interacts with JUN. As to expression, highly expressed in CD8-alpha(+) classical dendritic cells (cDCs), with low to absent expression in other immune cells and non-immune tissues.

It is found in the nucleus. In terms of biological role, AP-1 family transcription factor that controls the differentiation of CD8(+) thymic conventional dendritic cells in the immune system. Acts via the formation of a heterodimer with JUN family proteins that recognizes and binds DNA sequence 5'-TGA[CG]TCA-3' and regulates expression of target genes. Required for development of CD8-alpha(+) classical dendritic cells (cDCs) and related CD103(+) dendritic cells that cross-present antigens to CD8 T-cells and produce interleukin-12 (IL12) in response to pathogens. The protein is Basic leucine zipper transcriptional factor ATF-like 3 (Batf3) of Mus musculus (Mouse).